Here is a 396-residue protein sequence, read N- to C-terminus: DnaJ homolog subfamily A member 1 (396 aa).

In terms of domain architecture, J spans 6-68 (TYYDVLGVKP…KKRELYDKGG (63 aa)). Lys66 carries the N6-acetyllysine modification. Position 83 is a phosphoserine (Ser83). Residues 120–204 (GATRKLALQK…CNGRKIVREK (85 aa)) form a CR-type zinc finger. Zn(2+)-binding residues include Cys133, Cys136, Cys149, Cys152, Cys176, Cys179, Cys192, and Cys195. CXXCXGXG motif repeat units lie at residues 133-140 (CDKCEGRG), 149-156 (CPNCRGTG), 176-183 (CMECQGHG), and 192-199 (CKSCNGRK). Residue Ser334 is modified to Phosphoserine. The tract at residues 351 to 396 (VEETDEMDQVELVDFDPNQERRRHYNGEAYEDDEHHPRGGVQCQTS) is disordered. Residues 352-364 (EETDEMDQVELVD) are compositionally biased toward acidic residues. Tyr380 carries the phosphotyrosine modification. Cys393 bears the Cysteine methyl ester mark. Cys393 carries the S-farnesyl cysteine lipid modification. Positions 394–396 (QTS) are cleaved as a propeptide — removed in mature form.

Identified in a complex with HSPA1B and BAX. Interacts with RNF207.

Its subcellular location is the membrane. It is found in the cytoplasm. It localises to the microsome. The protein localises to the mitochondrion. The protein resides in the nucleus. Its subcellular location is the perinuclear region. Functionally, co-chaperone for HSPA8/Hsc70. Plays a role in protein transport into mitochondria via its role as co-chaperone. Functions as co-chaperone for HSPA1B and negatively regulates the translocation of BAX from the cytosol to mitochondria in response to cellular stress, thereby protecting cells against apoptosis. Stimulates ATP hydrolysis, but not the folding of unfolded proteins mediated by HSPA1A (in vitro). Promotes apoptosis in response to cellular stress mediated by exposure to anisomycin or UV. The chain is DnaJ homolog subfamily A member 1 (DNAJA1) from Pongo abelii (Sumatran orangutan).